Here is a 362-residue protein sequence, read N- to C-terminus: Cytochrome c peroxidase, mitochondrial (362 aa).

The transit peptide at 1–40 (MASASRQILRAASRASTRTAFAPAASRGLAARTIAGRRFY) directs the protein to the mitochondrion. The active-site Proton acceptor is the His-121. Residue His-244 coordinates heme b. The Tryptophan radical intermediate role is filled by Trp-260.

The protein belongs to the peroxidase family. Cytochrome c peroxidase subfamily. Forms a one-to-one complex with cytochrome c. Heme b serves as cofactor.

The protein resides in the mitochondrion matrix. Its subcellular location is the mitochondrion intermembrane space. The enzyme catalyses 2 Fe(II)-[cytochrome c] + H2O2 + 2 H(+) = 2 Fe(III)-[cytochrome c] + 2 H2O. Functionally, destroys radicals which are normally produced within the cells and which are toxic to biological systems. This chain is Cytochrome c peroxidase, mitochondrial (CCP1), found in Pyricularia oryzae (strain 70-15 / ATCC MYA-4617 / FGSC 8958) (Rice blast fungus).